Here is a 351-residue protein sequence, read N- to C-terminus: Soluble interferon alpha/beta receptor OPG204 (351 aa).

A signal peptide spans 1-23; sequence MKMKMMVRIYFVSLSLLLFHSYA. Ig-like C2-type domains follow at residues 65–137 and 155–237; these read LGEP…KNGD and PKTY…IVVS. 2 cysteine pairs are disulfide-bonded: C73/C129 and C172/C221. N-linked (GlcNAc...) asparagine; by host glycosylation is found at N117, N182, N261, N269, and N321. Positions 246–345 constitute an Ig-like V-type domain; that stretch reads PSQDHRFKLI…HNYYFDKTLT (100 aa). Cysteines 272 and 333 form a disulfide.

The protein belongs to the interleukin-1 receptor family. Interacts with host IFNA1.

The protein resides in the secreted. Its function is as follows. Counteracts the antiviral effects of host IFN-alpha/beta and key IFN-inducible proteins involved in viral RNA degradation suxh as host OAS1. Acts as a soluble IFN-alpha receptor and thus inhibits the interaction between host IFN-alpha and its receptor. The polypeptide is Soluble interferon alpha/beta receptor OPG204 (OPG204) (Cynomys gunnisoni (Gunnison's prairie dog)).